We begin with the raw amino-acid sequence, 629 residues long: Dolichyl-diphosphooligosaccharide--protein glycosyltransferase subunit 2 (629 aa).

A signal peptide spans M1–A22. Topologically, residues L23–V541 are lumenal. N-linked (GlcNAc...) asparagine glycosylation occurs at N106. K154 participates in a covalent cross-link: Glycyl lysine isopeptide (Lys-Gly) (interchain with G-Cter in ubiquitin). The helical transmembrane segment at V542–I562 threads the bilayer. At R563–N570 the chain is on the cytoplasmic side. A helical membrane pass occupies residues F571–Y591. Over W592–Q594 the chain is Lumenal. Residues L595–G615 traverse the membrane as a helical segment. Over N616–H629 the chain is Cytoplasmic.

This sequence belongs to the SWP1 family. Component of the oligosaccharyltransferase (OST) complex. OST exists in two different complex forms which contain common core subunits RPN1, RPN2, OST48, OST4, DAD1 and TMEM258, either STT3A or STT3B as catalytic subunits, and form-specific accessory subunits. STT3A complex assembly occurs through the formation of 3 subcomplexes. Subcomplex 1 contains RPN1 and TMEM258, subcomplex 2 contains the STT3A-specific subunits STT3A, DC2/OSTC, and KCP2 as well as the core subunit OST4, and subcomplex 3 contains RPN2, DAD1, and OST48. The STT3A complex can form stable complexes with the Sec61 complex or with both the Sec61 and TRAP complexes. Interacts with DDI2. Interacts with TMEM35A/NACHO.

Its subcellular location is the endoplasmic reticulum. The protein localises to the endoplasmic reticulum membrane. It participates in protein modification; protein glycosylation. In terms of biological role, subunit of the oligosaccharyl transferase (OST) complex that catalyzes the initial transfer of a defined glycan (Glc(3)Man(9)GlcNAc(2) in eukaryotes) from the lipid carrier dolichol-pyrophosphate to an asparagine residue within an Asn-X-Ser/Thr consensus motif in nascent polypeptide chains, the first step in protein N-glycosylation. N-glycosylation occurs cotranslationally and the complex associates with the Sec61 complex at the channel-forming translocon complex that mediates protein translocation across the endoplasmic reticulum (ER). All subunits are required for a maximal enzyme activity. In Sus scrofa (Pig), this protein is Dolichyl-diphosphooligosaccharide--protein glycosyltransferase subunit 2.